The primary structure comprises 374 residues: MKYLLPTAAAGLLLLAAQPAMAANTGGYATTDGGEVSGAVKKTARSMKEIVDIIEAAQVDSKGKKVKGGAYPLIITYSGNEDSLIKAAEKNICGQWSKDARGVQIKEFTKGITIQGTNGSSANFGVWIVNSSNVVVRNMRFGYMPGGAQDGDAIRIDNSPNVWIDHNEIFAKNFECKGTPDNDTTFESAVDIKKGSTNVTVSYNYIHGIKKVGLSGASNTDTGRNLTYHHNIYRDVNSRLPLQRGGLVHAYNNLYDGITGSGFNVRQKGIALIESNWFENALNPVTARNDSSNFGTWELRNNNITSPSDFAKYKITWGKPSSPHINADNWKSTGKFPSISYKYTPVSAQCVKDKLANYAGVGKNLAVLTAANCK.

An N-terminal signal peptide occupies residues 1-22; it reads MKYLLPTAAAGLLLLAAQPAMA. Residues C93 and C176 are joined by a disulfide bond. 4 residues coordinate Ca(2+): D150, D152, E187, and D191. R239 is a catalytic residue. Residues C350 and C373 are joined by a disulfide bond.

This sequence belongs to the polysaccharide lyase 1 family. PLADES subfamily. Ca(2+) serves as cofactor.

It is found in the secreted. The enzyme catalyses Eliminative cleavage of (1-&gt;4)-alpha-D-galacturonan to give oligosaccharides with 4-deoxy-alpha-D-galact-4-enuronosyl groups at their non-reducing ends.. It participates in glycan metabolism; pectin degradation; 2-dehydro-3-deoxy-D-gluconate from pectin: step 2/5. In terms of biological role, involved in maceration and soft-rotting of plant tissue. The polypeptide is Pectate lyase 2 (pel2) (Pectobacterium carotovorum (Erwinia carotovora)).